Here is a 132-residue protein sequence, read N- to C-terminus: MPNNYRIAKVSSLLKKEITLILQNDLENDLLRSNFISISKIEVTGDLQFCKIYISSAAEGNIRKEIIENLNLAKNYIKHILGQRIEMRRVPELTFKDDTALAKGLSVLKLLEELNNKTHNQNSQVEENNDNV.

The protein belongs to the RbfA family. Monomer. Binds 30S ribosomal subunits, but not 50S ribosomal subunits or 70S ribosomes.

Its subcellular location is the cytoplasm. Functionally, one of several proteins that assist in the late maturation steps of the functional core of the 30S ribosomal subunit. Associates with free 30S ribosomal subunits (but not with 30S subunits that are part of 70S ribosomes or polysomes). Required for efficient processing of 16S rRNA. May interact with the 5'-terminal helix region of 16S rRNA. This chain is Ribosome-binding factor A, found in Prochlorococcus marinus (strain MIT 9515).